Reading from the N-terminus, the 300-residue chain is Haloalkane dehalogenase 1 (300 aa).

The 130-residue stretch at 47–176 (PPIVLLHGEP…FARYSPVLPA (130 aa)) folds into the AB hydrolase-1 domain. D123 serves as the catalytic Nucleophile. D250 (proton donor) is an active-site residue. H279 acts as the Proton acceptor in catalysis.

It belongs to the haloalkane dehalogenase family. Type 1 subfamily. Monomer.

It catalyses the reaction 1-haloalkane + H2O = a halide anion + a primary alcohol + H(+). In terms of biological role, catalyzes hydrolytic cleavage of carbon-halogen bonds in halogenated aliphatic compounds, leading to the formation of the corresponding primary alcohols, halide ions and protons. This chain is Haloalkane dehalogenase 1 (dhmA1), found in Mycobacterium bovis (strain ATCC BAA-935 / AF2122/97).